Reading from the N-terminus, the 506-residue chain is AAA-ATPase At4g25835 (506 aa).

The N-terminal stretch at 1-20 is a signal peptide; sequence MKEYWTSLASLLGVLAFCQS. Residue 244-251 coordinates ATP; the sequence is GPPGTGKS. The disordered stretch occupies residues 462 to 506; the sequence is GKSRVQNVSLEEQENRAFDSLYAEENGGEEEEIEDNICKSSDDCS. Acidic residues predominate over residues 487-496; sequence NGGEEEEIED. A compositionally biased stretch (basic and acidic residues) spans 497–506; the sequence is NICKSSDDCS.

It belongs to the AAA ATPase family. BCS1 subfamily. It depends on Mg(2+) as a cofactor.

It catalyses the reaction ATP + H2O = ADP + phosphate + H(+). This chain is AAA-ATPase At4g25835, found in Arabidopsis thaliana (Mouse-ear cress).